The chain runs to 862 residues: Semaphorin-4D (862 aa).

Positions 1–21 (MRMCTPIRGLLMALAVMFGTA) are cleaved as a signal peptide. The Sema domain occupies 22 to 500 (MAFAPIPRIT…SNSGVVQAPL (479 aa)). The Extracellular segment spans residues 22 to 734 (MAFAPIPRIT…TMYLKSSDNR (713 aa)). Asparagine 49 and asparagine 77 each carry an N-linked (GlcNAc...) asparagine glycan. 2 cysteine pairs are disulfide-bonded: cysteine 97–cysteine 108 and cysteine 126–cysteine 135. N-linked (GlcNAc...) asparagine glycans are attached at residues asparagine 139 and asparagine 191. Intrachain disulfides connect cysteine 257/cysteine 370 and cysteine 281/cysteine 326. Residues asparagine 329, asparagine 379, and asparagine 419 are each glycosylated (N-linked (GlcNAc...) asparagine). The PSI domain maps to 502 to 551 (FCGKHGTCEDCVLARDPYCAWSPPTATCVALHQTESPSRGLIQEMSGDAS). 4 cysteine pairs are disulfide-bonded: cysteine 503–cysteine 520, cysteine 509–cysteine 553, cysteine 512–cysteine 529, and cysteine 576–cysteine 624. The Ig-like C2-type domain occupies 554–636 (PDKSKGSYRQ…EERVKNKTVF (83 aa)). N-linked (GlcNAc...) asparagine glycosylation is found at asparagine 613 and asparagine 632. The chain crosses the membrane as a helical span at residues 735-755 (LLMSLFLFFFVLFLCLFFYNC). Residues 756 to 862 (YKGYLPRQCL…KFADSDADGD (107 aa)) are Cytoplasmic-facing. The tract at residues 794-837 (VEPGSFSQQNGEHPKPALDTGYETEQDTITSKVPTDREDSQRID) is disordered. The segment covering 827–837 (PTDREDSQRID) has biased composition (basic and acidic residues). A Phosphoserine modification is found at serine 833.

Belongs to the semaphorin family. In terms of assembly, homodimer. Interacts with PLXNB2. Interacts with PLXNB1. As to expression, strongly expressed in skeletal muscle, peripheral blood lymphocytes, spleen, and thymus and also expressed at lower levels in testes, brain, kidney, small intestine, prostate, heart, placenta, lung and pancreas, but not in colon and liver.

It is found in the cell membrane. Cell surface receptor for PLXNB1 and PLXNB2 that plays an important role in cell-cell signaling. Regulates GABAergic synapse development. Promotes the development of inhibitory synapses in a PLXNB1-dependent manner. Modulates the complexity and arborization of developing neurites in hippocampal neurons by activating PLXNB1 and interaction with PLXNB1 mediates activation of RHOA. Promotes the migration of cerebellar granule cells. Plays a role in the immune system; induces B-cells to aggregate and improves their viability (in vitro). Induces endothelial cell migration through the activation of PTK2B/PYK2, SRC, and the phosphatidylinositol 3-kinase-AKT pathway. In Homo sapiens (Human), this protein is Semaphorin-4D (SEMA4D).